A 167-amino-acid chain; its full sequence is Urease accessory protein UreE (167 aa).

It belongs to the UreE family.

Its subcellular location is the cytoplasm. Involved in urease metallocenter assembly. Binds nickel. Probably functions as a nickel donor during metallocenter assembly. The polypeptide is Urease accessory protein UreE (Pseudomonas paraeruginosa (strain DSM 24068 / PA7) (Pseudomonas aeruginosa (strain PA7))).